Here is a 76-residue protein sequence, read N- to C-terminus: UPF0346 protein OEOE_1017 (76 aa).

The protein belongs to the UPF0346 family.

In Oenococcus oeni (strain ATCC BAA-331 / PSU-1), this protein is UPF0346 protein OEOE_1017.